Consider the following 281-residue polypeptide: NADPH-dependent 7-cyano-7-deazaguanine reductase (281 aa).

88–90 (VES) serves as a coordination point for substrate. 90 to 91 (SK) is a binding site for NADPH. Cys-189 serves as the catalytic Thioimide intermediate. Asp-196 (proton donor) is an active-site residue. 228–229 (HE) is a binding site for substrate. 257–258 (RG) serves as a coordination point for NADPH.

The protein belongs to the GTP cyclohydrolase I family. QueF type 2 subfamily. Homodimer.

The protein localises to the cytoplasm. It carries out the reaction 7-aminomethyl-7-carbaguanine + 2 NADP(+) = 7-cyano-7-deazaguanine + 2 NADPH + 3 H(+). Its pathway is tRNA modification; tRNA-queuosine biosynthesis. Catalyzes the NADPH-dependent reduction of 7-cyano-7-deazaguanine (preQ0) to 7-aminomethyl-7-deazaguanine (preQ1). This chain is NADPH-dependent 7-cyano-7-deazaguanine reductase, found in Klebsiella pneumoniae subsp. pneumoniae (strain ATCC 700721 / MGH 78578).